The primary structure comprises 241 residues: ATP synthase subunit a (241 aa).

5 consecutive transmembrane segments (helical) span residues 30–50 (GQIF…VLVG), 89–109 (LPFI…GALI), 128–148 (INTT…AGLS), 193–213 (LAVG…VMLL), and 214–234 (GLFT…FYIG).

Belongs to the ATPase A chain family. As to quaternary structure, F-type ATPases have 2 components, CF(1) - the catalytic core - and CF(0) - the membrane proton channel. CF(1) has five subunits: alpha(3), beta(3), gamma(1), delta(1), epsilon(1). CF(0) has four main subunits: a, b, b' and c.

Its subcellular location is the cellular thylakoid membrane. In terms of biological role, key component of the proton channel; it plays a direct role in the translocation of protons across the membrane. This is ATP synthase subunit a from Synechococcus sp. (strain CC9311).